Here is a 602-residue protein sequence, read N- to C-terminus: Elongation factor 4 (602 aa).

The tr-type G domain maps to 7-189; it reads KHIRNFSIVA…AIVDKIPSPQ (183 aa). GTP-binding positions include 19–24 and 136–139; these read DHGKST and NKID.

This sequence belongs to the TRAFAC class translation factor GTPase superfamily. Classic translation factor GTPase family. LepA subfamily.

It localises to the cell membrane. The catalysed reaction is GTP + H2O = GDP + phosphate + H(+). Functionally, required for accurate and efficient protein synthesis under certain stress conditions. May act as a fidelity factor of the translation reaction, by catalyzing a one-codon backward translocation of tRNAs on improperly translocated ribosomes. Back-translocation proceeds from a post-translocation (POST) complex to a pre-translocation (PRE) complex, thus giving elongation factor G a second chance to translocate the tRNAs correctly. Binds to ribosomes in a GTP-dependent manner. The sequence is that of Elongation factor 4 from Clostridium kluyveri (strain ATCC 8527 / DSM 555 / NBRC 12016 / NCIMB 10680 / K1).